A 350-amino-acid polypeptide reads, in one-letter code: 8-amino-7-oxononanoate synthase (350 aa).

Pyridoxal 5'-phosphate is bound at residue 77 to 78 (GY). H102 provides a ligand contact to substrate. Pyridoxal 5'-phosphate-binding positions include S150, 175–178 (DDAH), and 204–207 (TLSK). K207 carries the post-translational modification N6-(pyridoxal phosphate)lysine. T316 contributes to the substrate binding site.

Belongs to the class-II pyridoxal-phosphate-dependent aminotransferase family. BioF subfamily. In terms of assembly, homodimer. Requires pyridoxal 5'-phosphate as cofactor.

It carries out the reaction 6-carboxyhexanoyl-[ACP] + L-alanine + H(+) = (8S)-8-amino-7-oxononanoate + holo-[ACP] + CO2. The protein operates within cofactor biosynthesis; biotin biosynthesis. Catalyzes the decarboxylative condensation of pimeloyl-[acyl-carrier protein] and L-alanine to produce 8-amino-7-oxononanoate (AON), [acyl-carrier protein], and carbon dioxide. The chain is 8-amino-7-oxononanoate synthase from Methylocella silvestris (strain DSM 15510 / CIP 108128 / LMG 27833 / NCIMB 13906 / BL2).